The primary structure comprises 539 residues: Keratin, type II cytoskeletal 73 (539 aa).

The interval 1–130 is head; sequence MNRQFTCKPG…DPEIQKVRAQ (130 aa). Positions 131 to 166 are coil 1A; sequence EREQIKALNNKFASFIDKVRFLEQQNQVLQTKWELL. Residues 131-444 form the IF rod domain; that stretch reads EREQIKALNN…KLLEGEECRM (314 aa). The segment at 167 to 185 is linker 1; it reads QQLDLSNCRRNLEPVYEAH. The segment at 186-277 is coil 1B; it reads ISSLQKQLDS…CLYEGEITQM (92 aa). The tract at residues 278-301 is linker 12; that stretch reads QSHISDTSVVLSMDNNRNLDLDSI. Positions 302–440 are coil 2; sequence IAEVRAQYED…ATYRKLLEGE (139 aa). The tail stretch occupies residues 441–539; it reads ECRMSGEHTS…LGSPSKKTMR (99 aa).

It belongs to the intermediate filament family. In terms of assembly, heterotetramer of two type I and two type II keratins.

In terms of biological role, has a role in hair formation. Specific component of keratin intermediate filaments in the inner root sheath (IRS) of the hair follicle. This chain is Keratin, type II cytoskeletal 73 (Krt73), found in Mus musculus (Mouse).